The following is a 276-amino-acid chain: Large ribosomal subunit protein uL2 (276 aa).

The disordered stretch occupies residues 223–276; sequence GVAMNPVDHPHGGGEGRGKGHHPTSPWGLPTKGYKTRRGKRPSDKFIVRRRNEV. Composition is skewed to basic and acidic residues over residues 230-240 and 263-276; these read DHPHGGGEGRG and RPSD…RNEV.

It belongs to the universal ribosomal protein uL2 family. As to quaternary structure, part of the 50S ribosomal subunit. Forms a bridge to the 30S subunit in the 70S ribosome.

One of the primary rRNA binding proteins. Required for association of the 30S and 50S subunits to form the 70S ribosome, for tRNA binding and peptide bond formation. It has been suggested to have peptidyltransferase activity; this is somewhat controversial. Makes several contacts with the 16S rRNA in the 70S ribosome. This is Large ribosomal subunit protein uL2 from Thermotoga maritima (strain ATCC 43589 / DSM 3109 / JCM 10099 / NBRC 100826 / MSB8).